The sequence spans 474 residues: uncharacterized protein (474 aa).

Residues 1-14 (MGSRYPSHQLSNGL) are compositionally biased toward polar residues. The interval 1–137 (MGSRYPSHQL…QSGGVTRQNS (137 aa)) is disordered. Serine 45 bears the Phosphoserine mark. 3 stretches are compositionally biased toward polar residues: residues 73–83 (RSGSFAGTAQS), 97–113 (SLAS…NSGP), and 125–137 (SGPQ…RQNS). Serine 169 is modified (phosphoserine). The next 2 membrane-spanning stretches (helical) occupy residues 210 to 230 (VLWL…FILG) and 236 to 256 (ILLV…IWNI).

It is found in the membrane. This is an uncharacterized protein from Arabidopsis thaliana (Mouse-ear cress).